A 199-amino-acid chain; its full sequence is Interleukin-11 (199 aa).

Residues 1–21 (MNCVCRLVLVVLSLWPDRVVA) form the signal peptide. Positions 182–190 (HLTLDWAVR) are important for interaction with IL11RA and for the stimulation of cell proliferation.

Belongs to the IL-6 superfamily. As to quaternary structure, interacts with IL11RA to associate with IL6ST, giving rise to a multimeric signaling complex.

The protein resides in the secreted. Functionally, cytokine that stimulates the proliferation of hematopoietic stem cells and megakaryocyte progenitor cells and induces megakaryocyte maturation resulting in increased platelet production. Also promotes the proliferation of hepatocytes in response to liver damage. Binding to its receptor formed by IL6ST and IL11RA activates a signaling cascade that promotes cell proliferation. Signaling leads to the activation of intracellular protein kinases and the phosphorylation of STAT3. The interaction with the membrane-bound IL11RA and IL6ST stimulates 'classic signaling', whereas the binding of IL11 and soluble IL11RA to IL6ST stimulates 'trans-signaling'. This chain is Interleukin-11, found in Rattus norvegicus (Rat).